Consider the following 620-residue polypeptide: 1-deoxy-D-xylulose-5-phosphate synthase (620 aa).

Thiamine diphosphate is bound by residues His-80 and 121–123; that span reads GHS. Residue Asp-152 coordinates Mg(2+). Thiamine diphosphate contacts are provided by residues 153–154, Asn-181, Tyr-288, and Glu-370; that span reads GA. Asn-181 contacts Mg(2+).

The protein belongs to the transketolase family. DXPS subfamily. As to quaternary structure, homodimer. It depends on Mg(2+) as a cofactor. The cofactor is thiamine diphosphate.

The enzyme catalyses D-glyceraldehyde 3-phosphate + pyruvate + H(+) = 1-deoxy-D-xylulose 5-phosphate + CO2. It functions in the pathway metabolic intermediate biosynthesis; 1-deoxy-D-xylulose 5-phosphate biosynthesis; 1-deoxy-D-xylulose 5-phosphate from D-glyceraldehyde 3-phosphate and pyruvate: step 1/1. Functionally, catalyzes the acyloin condensation reaction between C atoms 2 and 3 of pyruvate and glyceraldehyde 3-phosphate to yield 1-deoxy-D-xylulose-5-phosphate (DXP). The sequence is that of 1-deoxy-D-xylulose-5-phosphate synthase from Escherichia fergusonii (strain ATCC 35469 / DSM 13698 / CCUG 18766 / IAM 14443 / JCM 21226 / LMG 7866 / NBRC 102419 / NCTC 12128 / CDC 0568-73).